The chain runs to 239 residues: Sugar fermentation stimulation protein homolog (239 aa).

The protein belongs to the SfsA family.

The sequence is that of Sugar fermentation stimulation protein homolog from Sinorhizobium medicae (strain WSM419) (Ensifer medicae).